Consider the following 577-residue polypeptide: MVICCAAVNCSNRQGKGEKRAVSFHRFPLKDSKRLIQWLKAVQRDNWTPTKYSFLCSEHFTKDSFSKRLEDQHRLLKPTAVPSIFHLTEKKRGAGGHGRTRRKDASKATGGVRGHSSAATSRGAAGWSPSSSGNPMAKPESRRLKQAALQGEATPRAAQEAASQEQAQQALERTPGDGLATMVAGSQGKAEASATDAGDESATSSIEGGVTDKSGISMDDFTPPGSGACKFIGSLHSYSFSSKHTRERPSVPREPIDRKRLKKDVEPSCSGSSLGPDKGLAQSPPSSSLTATPQKPSQSPSAPPADVTPKPATEAVQSEHSDASPMSINEVILSASGACKLIDSLHSYCFSSRQNKSQVCCLREQVEKKNGELKSLRQRVSRSDSQVRKLQEKLDELRRVSVPYPSSLLSPSREPPKMNPVVEPLSWMLGTWLSDPPGAGTYPTLQPFQYLEEVHISHVGQPMLNFSFNSFHPDTRKPMHRECGFIRLKPDTNKVAFVSAQNTGVVEVEEGEVNGQELCIASHSIARISFAKEPHVEQITRKFRLNSEGKLEQTVSMATTTQPMTQHLHVTYKKVTP.

The THAP-type zinc finger occupies 1–85; sequence MVICCAAVNC…LKPTAVPSIF (85 aa). The interval 84-221 is disordered; it reads IFHLTEKKRG…DKSGISMDDF (138 aa). Residues 157–170 show a composition bias toward low complexity; sequence AAQEAASQEQAQQA. Position 163 is a phosphoserine (S163). The HCFC1-binding motif (HBM) signature appears at 235–238; that stretch reads LHSY. The residue at position 239 (S239) is a Phosphoserine. Residues 240-324 form a disordered region; that stretch reads FSSKHTRERP…AVQSEHSDAS (85 aa). Residues 247 to 266 show a composition bias toward basic and acidic residues; it reads ERPSVPREPIDRKRLKKDVE. The span at 290-300 shows a compositional bias: low complexity; the sequence is TATPQKPSQSP. The interval 415-577 is nitrobindin; it reads PPKMNPVVEP…LHVTYKKVTP (163 aa). Heme b contacts are provided by T444 and H567.

The protein in the C-terminal section; belongs to the nitrobindin family. As to quaternary structure, homodimer. Heme b serves as cofactor.

It is found in the cytoplasm. The protein localises to the nucleus. It catalyses the reaction peroxynitrite = nitrate. The protein operates within nitrogen metabolism. Functionally, heme-binding protein able to scavenge peroxynitrite and to protect free L-tyrosine against peroxynitrite-mediated nitration, by acting as a peroxynitrite isomerase that converts peroxynitrite to nitrate. Therefore, this protein likely plays a role in peroxynitrite sensing and in the detoxification of reactive nitrogen and oxygen species (RNS and ROS, respectively). Is able to bind nitric oxide (NO) in vitro, but may act as a sensor of peroxynitrite levels in vivo, possibly modulating the transcriptional activity residing in the N-terminal region. The sequence is that of Peroxynitrite isomerase THAP4 from Homo sapiens (Human).